Here is a 545-residue protein sequence, read N- to C-terminus: Gamma-curcumene synthase (545 aa).

Mg(2+)-binding residues include D299, D303, N442, and E450. A DDXXD motif motif is present at residues D299–D303.

Belongs to the terpene synthase family. Mg(2+) is required as a cofactor.

Its subcellular location is the cytoplasm. It localises to the cytosol. The catalysed reaction is (2E,6E)-farnesyl diphosphate = gamma-curcumene + diphosphate. It participates in secondary metabolite biosynthesis; terpenoid biosynthesis. In terms of biological role, sesquiterpene synthase involved in gamma-curcumene biosynthesis. The sequence is that of Gamma-curcumene synthase from Pogostemon cablin (Patchouli).